A 323-amino-acid polypeptide reads, in one-letter code: Beta-ketoacyl-[acyl-carrier-protein] synthase III (323 aa).

Residues Cys113 and His250 contribute to the active site. An ACP-binding region spans residues 251–255 (QANKR). The active site involves Asn280.

Belongs to the thiolase-like superfamily. FabH family. As to quaternary structure, homodimer.

It is found in the cytoplasm. The enzyme catalyses malonyl-[ACP] + acetyl-CoA + H(+) = 3-oxobutanoyl-[ACP] + CO2 + CoA. The protein operates within lipid metabolism; fatty acid biosynthesis. Functionally, catalyzes the condensation reaction of fatty acid synthesis by the addition to an acyl acceptor of two carbons from malonyl-ACP. Catalyzes the first condensation reaction which initiates fatty acid synthesis and may therefore play a role in governing the total rate of fatty acid production. Possesses both acetoacetyl-ACP synthase and acetyl transacylase activities. Its substrate specificity determines the biosynthesis of branched-chain and/or straight-chain of fatty acids. In Brucella abortus biovar 1 (strain 9-941), this protein is Beta-ketoacyl-[acyl-carrier-protein] synthase III.